The following is a 192-amino-acid chain: dCTP deaminase, dUMP-forming (192 aa).

DCTP contacts are provided by residues 101 to 106 (KSSLGR), Asp-119, 127 to 129 (TLE), Gln-148, Tyr-162, and Gln-174. Glu-129 acts as the Proton donor/acceptor in catalysis. The tract at residues 165–184 (GAYGNRYQGQRGPTASRSHL) is disordered. The span at 171 to 183 (YQGQRGPTASRSH) shows a compositional bias: polar residues.

The protein belongs to the dCTP deaminase family. Homotrimer.

It carries out the reaction dCTP + 2 H2O = dUMP + NH4(+) + diphosphate. The protein operates within pyrimidine metabolism; dUMP biosynthesis; dUMP from dCTP: step 1/1. In terms of biological role, bifunctional enzyme that catalyzes both the deamination of dCTP to dUTP and the hydrolysis of dUTP to dUMP without releasing the toxic dUTP intermediate. The protein is dCTP deaminase, dUMP-forming of Kocuria rhizophila (strain ATCC 9341 / DSM 348 / NBRC 103217 / DC2201).